We begin with the raw amino-acid sequence, 270 residues long: tRNA pseudouridine synthase A (270 aa).

The active-site Nucleophile is the Asp-60. The segment at 107–111 (FHARF) is RNA binding. Tyr-118 contacts substrate. The tract at residues 168–172 (QCQSR) is interaction with tRNA.

Belongs to the tRNA pseudouridine synthase TruA family. Homodimer.

It catalyses the reaction uridine(38/39/40) in tRNA = pseudouridine(38/39/40) in tRNA. In terms of biological role, formation of pseudouridine at positions 38, 39 and 40 in the anticodon stem and loop of transfer RNAs. The sequence is that of tRNA pseudouridine synthase A from Shigella boydii serotype 4 (strain Sb227).